The sequence spans 225 residues: PKHD-type hydroxylase YbiX (225 aa).

The 100-residue stretch at 78 to 177 folds into the Fe2OG dioxygenase domain; it reads TLSTPLFNRY…RVASFMWIQS (100 aa). The Fe cation site is built by H96, D98, and H158. A 2-oxoglutarate-binding site is contributed by R168.

Fe(2+) is required as a cofactor. Requires L-ascorbate as cofactor.

This chain is PKHD-type hydroxylase YbiX, found in Escherichia coli O17:K52:H18 (strain UMN026 / ExPEC).